The following is a 139-amino-acid chain: Lymphocyte antigen 6H (139 aa).

Positions 1–25 are cleaved as a signal peptide; the sequence is MLPAAMKSLGLALLALLLCPSPAHG. Residues 26 to 113 enclose the UPAR/Ly6 domain; it reads LWCQDCTLAN…CEKDLCNGAS (88 aa). Intrachain disulfides connect C28–C51, C31–C39, C44–C72, C76–C103, and C104–C109. The N-linked (GlcNAc...) asparagine glycan is linked to N35. A lipid anchor (GPI-anchor amidated asparagine) is attached at N110. Positions 111-139 are cleaved as a propeptide — removed in mature form; sequence GASVAGRSPWALAGGLLLSLGPALLWAGP.

In terms of assembly, interacts with CHRNA4 and CHRNA7. As to expression, strongly expressed in brain, also found in lower levels in eye and reproductive tissues.

It localises to the cell membrane. Its function is as follows. Believed to act as modulator of nicotinic acetylcholine receptors (nAChRs) activity. In vitro inhibits alpha-3:beta-4-containing nAChRs maximum response. In vitro inhibits alpha-3:beta-4-containing nAChRs maximum response. May play a role in the intracellular trafficking of alpha-7-containing nAChRs and may inhibit their expression at the cell surface. Seems to inhibit alpha-7/CHRNA7 signaling in hippocampal neurons. The polypeptide is Lymphocyte antigen 6H (Ly6h) (Mus musculus (Mouse)).